The primary structure comprises 396 residues: Probable sugar efflux transporter (396 aa).

12 helical membrane-spanning segments follow: residues 15-35 (VVTL…PVGL), 50-70 (VGIM…PFML), 81-101 (LICL…AWNF), 103-123 (VLVI…SITA), 136-156 (AQAL…GLPI), 169-189 (TFFA…KLLP), 209-229 (PALM…YTAY), 246-266 (FATV…LVFG), 275-295 (SLVS…LPAA), 301-321 (LAIL…GMQV), 333-353 (VAMA…ALVG), and 364-384 (AIGY…VLIF).

This sequence belongs to the major facilitator superfamily. SotB (TC 2.A.1.2) family.

Its subcellular location is the cell inner membrane. Its function is as follows. Involved in the efflux of sugars. The physiological role may be the reduction of the intracellular concentration of toxic sugars or sugar metabolites. This Salmonella schwarzengrund (strain CVM19633) protein is Probable sugar efflux transporter.